The primary structure comprises 343 residues: tRNA N6-adenosine threonylcarbamoyltransferase (343 aa).

His-115 and His-119 together coordinate Fe cation. Substrate contacts are provided by residues 138 to 142, Asp-171, Gly-184, and Asn-276; that span reads LVSGA. Residue Asp-304 participates in Fe cation binding.

Belongs to the KAE1 / TsaD family. Requires Fe(2+) as cofactor.

Its subcellular location is the cytoplasm. It carries out the reaction L-threonylcarbamoyladenylate + adenosine(37) in tRNA = N(6)-L-threonylcarbamoyladenosine(37) in tRNA + AMP + H(+). Its function is as follows. Required for the formation of a threonylcarbamoyl group on adenosine at position 37 (t(6)A37) in tRNAs that read codons beginning with adenine. Is involved in the transfer of the threonylcarbamoyl moiety of threonylcarbamoyl-AMP (TC-AMP) to the N6 group of A37, together with TsaE and TsaB. TsaD likely plays a direct catalytic role in this reaction. In Buchnera aphidicola subsp. Cinara cedri (strain Cc), this protein is tRNA N6-adenosine threonylcarbamoyltransferase.